The primary structure comprises 157 residues: Alanyl-tRNA editing protein AlaX-S (157 aa).

H9, H13, C116, and H120 together coordinate Zn(2+).

The protein belongs to the class-II aminoacyl-tRNA synthetase family. Editing domain AlaX-S subfamily. As to quaternary structure, monomer and homodimer; the dimer is less active in tRNA editing and does not have a zinc ion associated with it. Another report shows only a monomeric form. The cofactor is Zn(2+).

The protein resides in the cytoplasm. Its function is as follows. Functions in trans to edit the amino acid moiety from mischarged charged Ser-tRNA(Ala). Has little activity against Gly-tRNA(Ala). The polypeptide is Alanyl-tRNA editing protein AlaX-S (alaXS) (Pyrococcus horikoshii (strain ATCC 700860 / DSM 12428 / JCM 9974 / NBRC 100139 / OT-3)).